A 260-amino-acid polypeptide reads, in one-letter code: Phosphate import ATP-binding protein PstB 2 (260 aa).

An ABC transporter domain is found at 9–255 (IKVKDLSFYY…PLDSRTRDYV (247 aa)). ATP is bound at residue 41–48 (GPSGCGKS).

This sequence belongs to the ABC transporter superfamily. Phosphate importer (TC 3.A.1.7) family. In terms of assembly, the complex is composed of two ATP-binding proteins (PstB), two transmembrane proteins (PstC and PstA) and a solute-binding protein (PstS).

The protein resides in the cell inner membrane. The catalysed reaction is phosphate(out) + ATP + H2O = ADP + 2 phosphate(in) + H(+). Its function is as follows. Part of the ABC transporter complex PstSACB involved in phosphate import. Responsible for energy coupling to the transport system. The chain is Phosphate import ATP-binding protein PstB 2 from Nostoc sp. (strain PCC 7120 / SAG 25.82 / UTEX 2576).